We begin with the raw amino-acid sequence, 140 residues long: Large ribosomal subunit protein uL16 (140 aa).

This sequence belongs to the universal ribosomal protein uL16 family. In terms of assembly, part of the 50S ribosomal subunit.

In terms of biological role, binds 23S rRNA and is also seen to make contacts with the A and possibly P site tRNAs. This chain is Large ribosomal subunit protein uL16, found in Geotalea uraniireducens (strain Rf4) (Geobacter uraniireducens).